The chain runs to 197 residues: Small ribosomal subunit protein uS4c (197 aa).

Residues M85–N161 form the S4 RNA-binding domain.

This sequence belongs to the universal ribosomal protein uS4 family. Part of the 30S ribosomal subunit. Contacts protein S5. The interaction surface between S4 and S5 is involved in control of translational fidelity.

It is found in the plastid. In terms of biological role, one of the primary rRNA binding proteins, it binds directly to 16S rRNA where it nucleates assembly of the body of the 30S subunit. Its function is as follows. With S5 and S12 plays an important role in translational accuracy. The protein is Small ribosomal subunit protein uS4c (rps4) of Cuscuta obtusiflora (Peruvian dodder).